The primary structure comprises 472 residues: Doublesex- and mab-3-related transcription factor 3 (472 aa).

The DM DNA-binding region spans 29 to 76 (CARCRNHGVLSWLKGHKRYCRFKDCTCEKCILIIERQRVMAAQVALRR). Disordered regions lie at residues 89 to 128 (DSLR…AELA) and 155 to 191 (EERL…GCFT). Residues 95–123 (PGPPPPGDAVAAPQPPPASQPSQPQPPRP) are compositionally biased toward pro residues. Positions 155–179 (EERLGDGKSADNTEVFSDKDTDQRS) are enriched in basic and acidic residues. The DMA domain occupies 249 to 284 (RPPLEVLKKIFPNQKPTVLELILKGCGGDLVSAVEV). A disordered region spans residues 430-472 (TEDPRISIPDDGCPFVSKQSIYTEDDYDERSDSSDSRTLNTSS).

It belongs to the DMRT family. May homodimerize. Expressed in testis.

The protein resides in the nucleus. In terms of biological role, probable transcription factor that plays a role in configuring the spinal circuits controlling stride in vertebrates. Involved in neuronal specification within specific subdivision of spinal cord neurons and in the development of a coordinated locomotor network controlling limb movements. May regulate transcription during sexual development. The protein is Doublesex- and mab-3-related transcription factor 3 (DMRT3) of Homo sapiens (Human).